An 82-amino-acid chain; its full sequence is MLRQILGQAKKHPSLIPLFVFIGAGGTGAALYVMRLALFNPDVSWDRKNNPEPWNKLGPNEQYKFYSVNVDYSKLKKEGPDF.

Over 1–14 the chain is Mitochondrial matrix; the sequence is MLRQILGQAKKHPS. An N6-acetyllysine modification is found at lysine 10. The helical transmembrane segment at 15–37 threads the bilayer; the sequence is LIPLFVFIGAGGTGAALYVMRLA. Topologically, residues 38–82 are mitochondrial intermembrane; sequence LFNPDVSWDRKNNPEPWNKLGPNEQYKFYSVNVDYSKLKKEGPDF. Residue serine 67 is modified to Phosphoserine.

The protein belongs to the complex IV NDUFA4 subunit family. As to quaternary structure, component of the cytochrome c oxidase (complex IV, CIV), a multisubunit enzyme composed of 14 subunits. The complex is composed of a catalytic core of 3 subunits MT-CO1, MT-CO2 and MT-CO3, encoded in the mitochondrial DNA, and 11 supernumerary subunits COX4I, COX5A, COX5B, COX6A, COX6B, COX6C, COX7A, COX7B, COX7C, COX8 and NDUFA4, which are encoded in the nuclear genome. The complex exists as a monomer or a dimer and forms supercomplexes (SCs) in the inner mitochondrial membrane with NADH-ubiquinone oxidoreductase (complex I, CI) and ubiquinol-cytochrome c oxidoreductase (cytochrome b-c1 complex, complex III, CIII), resulting in different assemblies (supercomplex SCI(1)III(2)IV(1) and megacomplex MCI(2)III(2)IV(2)). Interacts with RAB5IF. Interacts with FLVCR2; this interaction occurs in the absence of heme and is disrupted upon heme binding.

The protein localises to the mitochondrion inner membrane. In terms of biological role, component of the cytochrome c oxidase, the last enzyme in the mitochondrial electron transport chain which drives oxidative phosphorylation. The respiratory chain contains 3 multisubunit complexes succinate dehydrogenase (complex II, CII), ubiquinol-cytochrome c oxidoreductase (cytochrome b-c1 complex, complex III, CIII) and cytochrome c oxidase (complex IV, CIV), that cooperate to transfer electrons derived from NADH and succinate to molecular oxygen, creating an electrochemical gradient over the inner membrane that drives transmembrane transport and the ATP synthase. Cytochrome c oxidase is the component of the respiratory chain that catalyzes the reduction of oxygen to water. Electrons originating from reduced cytochrome c in the intermembrane space (IMS) are transferred via the dinuclear copper A center (CU(A)) of subunit 2 and heme A of subunit 1 to the active site in subunit 1, a binuclear center (BNC) formed by heme A3 and copper B (CU(B)). The BNC reduces molecular oxygen to 2 water molecules unsing 4 electrons from cytochrome c in the IMS and 4 protons from the mitochondrial matrix. NDUFA4 is required for complex IV maintenance. This Mus musculus (Mouse) protein is Cytochrome c oxidase subunit NDUFA4 (Ndufa4).